We begin with the raw amino-acid sequence, 135 residues long: Small ribosomal subunit protein uS11 (135 aa).

The protein belongs to the universal ribosomal protein uS11 family. In terms of assembly, part of the 30S ribosomal subunit. Interacts with proteins S7 and S18. Binds to IF-3.

Functionally, located on the platform of the 30S subunit, it bridges several disparate RNA helices of the 16S rRNA. Forms part of the Shine-Dalgarno cleft in the 70S ribosome. The protein is Small ribosomal subunit protein uS11 of Corynebacterium urealyticum (strain ATCC 43042 / DSM 7109).